The following is a 77-amino-acid chain: Large ribosomal subunit protein eL20 (77 aa).

This sequence belongs to the eukaryotic ribosomal protein eL20 family. As to quaternary structure, part of the 50S ribosomal subunit. Binds 23S rRNA.

The polypeptide is Large ribosomal subunit protein eL20 (Pyrococcus horikoshii (strain ATCC 700860 / DSM 12428 / JCM 9974 / NBRC 100139 / OT-3)).